We begin with the raw amino-acid sequence, 150 residues long: MVKQPSVKDVDQHEIVRYIAGFLKKSGKVKVPEWSDLVKLGITKELAPVDSDWYYVRTASVARRLYIRSPTGVGALRRVYGGNKRRGVTPNHFARASGSVIRKALQTLEAIKWVEKHPDGNGRILTKQGRKDLDRIASQMRQNTKITLEP.

Belongs to the eukaryotic ribosomal protein eS19 family.

The sequence is that of Small ribosomal subunit protein eS19S (RPS19S) from Ascaris suum (Pig roundworm).